We begin with the raw amino-acid sequence, 221 residues long: Ribosomal RNA small subunit methyltransferase G (221 aa).

Residues Gly78, Phe83, and Arg150 each coordinate S-adenosyl-L-methionine.

The protein belongs to the methyltransferase superfamily. RNA methyltransferase RsmG family.

It localises to the cytoplasm. Specifically methylates the N7 position of a guanine in 16S rRNA. The polypeptide is Ribosomal RNA small subunit methyltransferase G (Bifidobacterium longum (strain DJO10A)).